A 273-amino-acid polypeptide reads, in one-letter code: Putative phosphoenolpyruvate synthase regulatory protein (273 aa).

Residue 153 to 160 (GVSRSGKT) coordinates ADP.

This sequence belongs to the pyruvate, phosphate/water dikinase regulatory protein family. PSRP subfamily.

The catalysed reaction is [pyruvate, water dikinase] + ADP = [pyruvate, water dikinase]-phosphate + AMP + H(+). The enzyme catalyses [pyruvate, water dikinase]-phosphate + phosphate + H(+) = [pyruvate, water dikinase] + diphosphate. Its function is as follows. Bifunctional serine/threonine kinase and phosphorylase involved in the regulation of the phosphoenolpyruvate synthase (PEPS) by catalyzing its phosphorylation/dephosphorylation. The protein is Putative phosphoenolpyruvate synthase regulatory protein of Delftia acidovorans (strain DSM 14801 / SPH-1).